The chain runs to 371 residues: Glutamate 5-kinase 2 (371 aa).

ATP is bound at residue lysine 13. 3 residues coordinate substrate: serine 53, aspartate 140, and asparagine 152. ATP contacts are provided by residues serine 172 to aspartate 173 and threonine 214 to lysine 220. The PUA domain occupies glutamate 280 to aspartate 356.

The protein belongs to the glutamate 5-kinase family.

It localises to the cytoplasm. The catalysed reaction is L-glutamate + ATP = L-glutamyl 5-phosphate + ADP. The protein operates within amino-acid biosynthesis; L-proline biosynthesis; L-glutamate 5-semialdehyde from L-glutamate: step 1/2. Its function is as follows. Catalyzes the transfer of a phosphate group to glutamate to form L-glutamate 5-phosphate. In Bacillus subtilis (strain 168), this protein is Glutamate 5-kinase 2 (proJ).